Here is a 213-residue protein sequence, read N- to C-terminus: 3-isopropylmalate dehydratase small subunit (213 aa).

Belongs to the LeuD family. LeuD type 1 subfamily. Heterodimer of LeuC and LeuD.

It catalyses the reaction (2R,3S)-3-isopropylmalate = (2S)-2-isopropylmalate. It participates in amino-acid biosynthesis; L-leucine biosynthesis; L-leucine from 3-methyl-2-oxobutanoate: step 2/4. In terms of biological role, catalyzes the isomerization between 2-isopropylmalate and 3-isopropylmalate, via the formation of 2-isopropylmaleate. The sequence is that of 3-isopropylmalate dehydratase small subunit from Aromatoleum aromaticum (strain DSM 19018 / LMG 30748 / EbN1) (Azoarcus sp. (strain EbN1)).